The sequence spans 463 residues: Retinoic acid receptor RXR-gamma (463 aa).

The interval 1 to 138 (MYGNYSHFMK…TSPGSLVKHI (138 aa)) is modulating. The segment at 16-53 (GGSPGHTGSTSMSPSVALPTGKPMDSHPSYTDTPVSAP) is disordered. 2 NR C4-type zinc fingers span residues 139–159 (CAIC…CEGC) and 175–199 (CRDN…YQKC). Residues 139–204 (CAICGDRSSG…RYQKCLVMGM (66 aa)) constitute a DNA-binding region (nuclear receptor). Residues 205–230 (KREAVQEERQRSRERAESEAECASTG) form a hinge region. Residues 231–459 (HEDMPVERIL…TFLMEMLETP (229 aa)) enclose the NR LBD domain.

The protein belongs to the nuclear hormone receptor family. NR2 subfamily. In terms of assembly, homodimer. Heterodimer with a RAR molecule. Binds DNA preferentially as a RAR/RXR heterodimer. Interacts with RARA. Post-translationally, acetylated by EP300. In terms of tissue distribution, expressed in the liver, but not detected in the adrenal gland (at protein level). Restricted expression in adrenal gland, kidney, liver, brain and lungs. Strong expression in heart and muscles.

The protein resides in the nucleus. It is found in the cytoplasm. Receptor for retinoic acid. Retinoic acid receptors bind as heterodimers to their target response elements in response to their ligands, all-trans or 9-cis retinoic acid, and regulate gene expression in various biological processes. The RAR/RXR heterodimers bind to the retinoic acid response elements (RARE) composed of tandem 5'-AGGTCA-3' sites known as DR1-DR5. The high affinity ligand for RXRs is 9-cis retinoic acid. The sequence is that of Retinoic acid receptor RXR-gamma (Rxrg) from Rattus norvegicus (Rat).